The chain runs to 154 residues: Xanthine-guanine phosphoribosyltransferase (154 aa).

5-phospho-alpha-D-ribose 1-diphosphate-binding positions include 37-38 (RG) and 90-98 (DDLVDTGNT). D91 is a binding site for Mg(2+). Residues D94 and I137 each contribute to the guanine site. D94 and I137 together coordinate xanthine. GMP contacts are provided by residues 94 to 98 (DTGNT) and 136 to 137 (WI).

Belongs to the purine/pyrimidine phosphoribosyltransferase family. XGPT subfamily. As to quaternary structure, homotetramer. Requires Mg(2+) as cofactor.

Its subcellular location is the cell inner membrane. It carries out the reaction GMP + diphosphate = guanine + 5-phospho-alpha-D-ribose 1-diphosphate. It catalyses the reaction XMP + diphosphate = xanthine + 5-phospho-alpha-D-ribose 1-diphosphate. The catalysed reaction is IMP + diphosphate = hypoxanthine + 5-phospho-alpha-D-ribose 1-diphosphate. It participates in purine metabolism; GMP biosynthesis via salvage pathway; GMP from guanine: step 1/1. The protein operates within purine metabolism; XMP biosynthesis via salvage pathway; XMP from xanthine: step 1/1. In terms of biological role, purine salvage pathway enzyme that catalyzes the transfer of the ribosyl-5-phosphate group from 5-phospho-alpha-D-ribose 1-diphosphate (PRPP) to the N9 position of the 6-oxopurines guanine and xanthine to form the corresponding ribonucleotides GMP (guanosine 5'-monophosphate) and XMP (xanthosine 5'-monophosphate), with the release of PPi. To a lesser extent, also acts on hypoxanthine. The chain is Xanthine-guanine phosphoribosyltransferase from Histophilus somni (strain 129Pt) (Haemophilus somnus).